Here is a 282-residue protein sequence, read N- to C-terminus: tRNA pseudouridine synthase B (282 aa).

Catalysis depends on Asp-39, which acts as the Nucleophile.

The protein belongs to the pseudouridine synthase TruB family. Type 1 subfamily.

It carries out the reaction uridine(55) in tRNA = pseudouridine(55) in tRNA. Functionally, responsible for synthesis of pseudouridine from uracil-55 in the psi GC loop of transfer RNAs. The sequence is that of tRNA pseudouridine synthase B from Borreliella burgdorferi (strain ATCC 35210 / DSM 4680 / CIP 102532 / B31) (Borrelia burgdorferi).